The primary structure comprises 405 residues: Accessory Sec system protein translocase subunit SecY2 (405 aa).

Helical transmembrane passes span 14-34 (MCTL…LPFV), 65-85 (LFSI…MFSF), 104-124 (MYLT…NLPV), 131-151 (FLVF…LVWL), 156-176 (ATIG…ASLP), 190-210 (LGLL…VVLF), 243-263 (GMPY…LLLL), 285-305 (PLWI…FAFV), 343-363 (FALI…LFVL), and 368-388 (LLKV…LFTI).

Belongs to the SecY/SEC61-alpha family. SecY2 subfamily. As to quaternary structure, component of the accessory SecA2/SecY2 protein translocase complex required to export cell wall proteins. May form heterotrimers with SecE and SecG subunits.

The protein localises to the cell membrane. Its function is as follows. Part of the accessory SecA2/SecY2 system specifically required for export of possible cell wall proteins. The central subunit of a protein translocation channel. This Streptococcus oralis (strain Uo5) protein is Accessory Sec system protein translocase subunit SecY2.